The sequence spans 170 residues: Arginine repressor (170 aa).

Belongs to the ArgR family.

The protein resides in the cytoplasm. The protein operates within amino-acid biosynthesis; L-arginine biosynthesis [regulation]. Its function is as follows. Regulates arginine biosynthesis genes. The sequence is that of Arginine repressor from Bifidobacterium longum (strain DJO10A).